Here is a 272-residue protein sequence, read N- to C-terminus: tRNA pseudouridine synthase A (272 aa).

D62 (nucleophile) is an active-site residue. A substrate-binding site is contributed by Y120.

Belongs to the tRNA pseudouridine synthase TruA family. Homodimer.

The catalysed reaction is uridine(38/39/40) in tRNA = pseudouridine(38/39/40) in tRNA. In terms of biological role, formation of pseudouridine at positions 38, 39 and 40 in the anticodon stem and loop of transfer RNAs. The chain is tRNA pseudouridine synthase A from Nitrosomonas europaea (strain ATCC 19718 / CIP 103999 / KCTC 2705 / NBRC 14298).